We begin with the raw amino-acid sequence, 248 residues long: Tryptophan synthase alpha chain (248 aa).

Catalysis depends on proton acceptor residues Glu-36 and Asp-47.

It belongs to the TrpA family. As to quaternary structure, tetramer of two alpha and two beta chains.

It catalyses the reaction (1S,2R)-1-C-(indol-3-yl)glycerol 3-phosphate + L-serine = D-glyceraldehyde 3-phosphate + L-tryptophan + H2O. The protein operates within amino-acid biosynthesis; L-tryptophan biosynthesis; L-tryptophan from chorismate: step 5/5. Its function is as follows. The alpha subunit is responsible for the aldol cleavage of indoleglycerol phosphate to indole and glyceraldehyde 3-phosphate. This Pyrococcus furiosus (strain ATCC 43587 / DSM 3638 / JCM 8422 / Vc1) protein is Tryptophan synthase alpha chain.